The chain runs to 649 residues: V-type ATP synthase subunit I (649 aa).

The next 7 membrane-spanning stretches (helical) occupy residues 312 to 332, 360 to 380, 453 to 473, 485 to 505, 520 to 540, 556 to 576, and 593 to 613; these read FFSF…GLVF, FMIL…FFGV, FIDN…LSLG, IGWV…LQAV, GLVG…GGVI, VFSD…GAMV, and ILII…GGVI.

Belongs to the V-ATPase 116 kDa subunit family.

It is found in the cell membrane. In terms of biological role, produces ATP from ADP in the presence of a proton gradient across the membrane. This is V-type ATP synthase subunit I (atpI) from Chlamydia trachomatis serovar D (strain ATCC VR-885 / DSM 19411 / UW-3/Cx).